A 273-amino-acid chain; its full sequence is Dermonecrotic toxin LhSicTox-alphaIA2bvi (273 aa).

H5 is a catalytic residue. Mg(2+) contacts are provided by E25 and D27. H41 serves as the catalytic Nucleophile. 2 disulfides stabilise this stretch: C45-C51 and C47-C190. Residue D85 participates in Mg(2+) binding.

This sequence belongs to the arthropod phospholipase D family. Class II subfamily. It depends on Mg(2+) as a cofactor. As to expression, expressed by the venom gland.

It localises to the secreted. The enzyme catalyses an N-(acyl)-sphingosylphosphocholine = an N-(acyl)-sphingosyl-1,3-cyclic phosphate + choline. It carries out the reaction an N-(acyl)-sphingosylphosphoethanolamine = an N-(acyl)-sphingosyl-1,3-cyclic phosphate + ethanolamine. The catalysed reaction is a 1-acyl-sn-glycero-3-phosphocholine = a 1-acyl-sn-glycero-2,3-cyclic phosphate + choline. It catalyses the reaction a 1-acyl-sn-glycero-3-phosphoethanolamine = a 1-acyl-sn-glycero-2,3-cyclic phosphate + ethanolamine. Its function is as follows. Dermonecrotic toxins cleave the phosphodiester linkage between the phosphate and headgroup of certain phospholipids (sphingolipid and lysolipid substrates), forming an alcohol (often choline) and a cyclic phosphate. This toxin acts on sphingomyelin (SM). It may also act on ceramide phosphoethanolamine (CPE), lysophosphatidylcholine (LPC) and lysophosphatidylethanolamine (LPE), but not on lysophosphatidylserine (LPS), and lysophosphatidylglycerol (LPG). It acts by transphosphatidylation, releasing exclusively cyclic phosphate products as second products. Induces dermonecrosis, hemolysis, increased vascular permeability, edema, inflammatory response, and platelet aggregation. This is Dermonecrotic toxin LhSicTox-alphaIA2bvi from Loxosceles hirsuta (Recluse spider).